Here is a 600-residue protein sequence, read N- to C-terminus: Proline--tRNA ligase (600 aa).

It belongs to the class-II aminoacyl-tRNA synthetase family. ProS type 1 subfamily. Homodimer.

Its subcellular location is the cytoplasm. The catalysed reaction is tRNA(Pro) + L-proline + ATP = L-prolyl-tRNA(Pro) + AMP + diphosphate. Its function is as follows. Catalyzes the attachment of proline to tRNA(Pro) in a two-step reaction: proline is first activated by ATP to form Pro-AMP and then transferred to the acceptor end of tRNA(Pro). As ProRS can inadvertently accommodate and process non-cognate amino acids such as alanine and cysteine, to avoid such errors it has two additional distinct editing activities against alanine. One activity is designated as 'pretransfer' editing and involves the tRNA(Pro)-independent hydrolysis of activated Ala-AMP. The other activity is designated 'posttransfer' editing and involves deacylation of mischarged Ala-tRNA(Pro). The misacylated Cys-tRNA(Pro) is not edited by ProRS. This chain is Proline--tRNA ligase, found in Prochlorococcus marinus (strain MIT 9211).